The sequence spans 267 residues: Hydroxyethylthiazole kinase (267 aa).

Met48 is a substrate binding site. ATP contacts are provided by Arg124 and Ser170. Gly197 contacts substrate.

This sequence belongs to the Thz kinase family. Requires Mg(2+) as cofactor.

The catalysed reaction is 5-(2-hydroxyethyl)-4-methylthiazole + ATP = 4-methyl-5-(2-phosphooxyethyl)-thiazole + ADP + H(+). It participates in cofactor biosynthesis; thiamine diphosphate biosynthesis; 4-methyl-5-(2-phosphoethyl)-thiazole from 5-(2-hydroxyethyl)-4-methylthiazole: step 1/1. In terms of biological role, catalyzes the phosphorylation of the hydroxyl group of 4-methyl-5-beta-hydroxyethylthiazole (THZ). This Aliivibrio fischeri (strain ATCC 700601 / ES114) (Vibrio fischeri) protein is Hydroxyethylthiazole kinase.